A 241-amino-acid chain; its full sequence is Neuroendocrine secretory protein 55 (241 aa).

Positions 1–46 (MDRRSRPQLGRRARHNYNDLCPPIGRRAATALLWLSCSIALLRALA) are cleaved as a signal peptide. The segment at 71 to 241 (AAQVFPEPPE…KRGAIPIRRH (171 aa)) is disordered. Acidic residues predominate over residues 97-125 (EYQEEEFDYESETESESEIESETEFETES). A compositionally biased stretch (low complexity) spans 167–177 (PDASPSRAPPS). Over residues 182-198 (ESPRQGEEPEDKDPRDP) the composition is skewed to basic and acidic residues. The span at 212–221 (QHRCKPKKPT) shows a compositional bias: basic residues.

Belongs to the NESP55 family. Binds keratan sulfate chains. Post-translationally, may be proteolytically processed to give rise to a number of active peptides. Highly expressed in adrenal medulla and anterior and posterior pituitary. In the brain, detected in hypothalamus, hippocampus, caudate nucleus, thalamus and, in significantly lower amounts, in the cerebellum.

It localises to the cytoplasmic vesicle. It is found in the secretory vesicle. The protein localises to the secreted. This chain is Neuroendocrine secretory protein 55, found in Bos taurus (Bovine).